A 196-amino-acid polypeptide reads, in one-letter code: Imidazole glycerol phosphate synthase subunit HisH (196 aa).

The Glutamine amidotransferase type-1 domain maps to 2-196 (KIIIINTNCS…EQLIKNFLEI (195 aa)). C77 (nucleophile) is an active-site residue. Residues H178 and E180 contribute to the active site.

As to quaternary structure, heterodimer of HisH and HisF.

The protein resides in the cytoplasm. It catalyses the reaction 5-[(5-phospho-1-deoxy-D-ribulos-1-ylimino)methylamino]-1-(5-phospho-beta-D-ribosyl)imidazole-4-carboxamide + L-glutamine = D-erythro-1-(imidazol-4-yl)glycerol 3-phosphate + 5-amino-1-(5-phospho-beta-D-ribosyl)imidazole-4-carboxamide + L-glutamate + H(+). The enzyme catalyses L-glutamine + H2O = L-glutamate + NH4(+). It participates in amino-acid biosynthesis; L-histidine biosynthesis; L-histidine from 5-phospho-alpha-D-ribose 1-diphosphate: step 5/9. IGPS catalyzes the conversion of PRFAR and glutamine to IGP, AICAR and glutamate. The HisH subunit catalyzes the hydrolysis of glutamine to glutamate and ammonia as part of the synthesis of IGP and AICAR. The resulting ammonia molecule is channeled to the active site of HisF. The polypeptide is Imidazole glycerol phosphate synthase subunit HisH (Blochmanniella floridana).